The chain runs to 491 residues: Phosphoethanolamine N-methyltransferase 1 (491 aa).

An N-acetylalanine modification is found at A2. S-adenosyl-L-homocysteine is bound by residues G61, R66, D82, D107, V108, and N126. 5 residues coordinate phosphocholine: S159, S164, G165, R169, and Y176. N-methylethanolamine phosphate contacts are provided by residues 245 to 246 and Y254; that span reads QY. Y254 provides a ligand contact to phosphocholine. S-adenosyl-L-homocysteine contacts are provided by V263, S264, G290, D312, D338, C339, and R355. Phosphocholine is bound by residues Y386, Y400, R404, Y406, and K472. N-methylethanolamine phosphate-binding positions include Y386, Y400, 404–406, and K472; that span reads RGY.

This sequence belongs to the class I-like SAM-binding methyltransferase superfamily. PEAMT family. As to expression, highly expressed in the meristem and elongation zones of the root. Expressed in differentiated root epidermal cells. Highly expressed in leaf vasculature.

It is found in the cytoplasm. The catalysed reaction is phosphoethanolamine + S-adenosyl-L-methionine = N-methylethanolamine phosphate + S-adenosyl-L-homocysteine + H(+). It catalyses the reaction N-methylethanolamine phosphate + S-adenosyl-L-methionine = N,N-dimethylethanolamine phosphate + S-adenosyl-L-homocysteine + H(+). It carries out the reaction N,N-dimethylethanolamine phosphate + S-adenosyl-L-methionine = phosphocholine + S-adenosyl-L-homocysteine + H(+). Its pathway is phospholipid metabolism; phosphatidylcholine biosynthesis; phosphocholine from phosphoethanolamine: step 1/1. Its function is as follows. Involved in phosphocholine biosynthesis. Catalyzes the N-methylation of phosphoethanolamine, phosphomonomethylethanolamine and phosphodimethylethanolamine, the three methylation steps required to convert phosphoethanolamine to phosphocholine (PC). Required for root system development and epidermal cell integrity through its role in choline and phospholipid metabolism. In association with NMT3, regulates PC homeostasis, phase transition at the shoot apex, coordinated organ development, and fertility. In association with NMT3, involved in phosphatidylcholine biosynthesis and vascular development. In association with NMT2, involved in the production of phosphatidylcholine in roots, essential for root development. In association with NMT2 produce phosphocholine mainly for leaf growth maintenance. Contributes to the regulation of overall root zonation dynamics through reactive oxygen species (ROS) and auxin-regulated cell differentiation. Participates in root development of primary root elongation under salt stress conditions by balancing reactive oxygen species (ROS) production and distribution through abscisic acid (ABA) signaling. This Arabidopsis thaliana (Mouse-ear cress) protein is Phosphoethanolamine N-methyltransferase 1.